A 713-amino-acid chain; its full sequence is Topoisomerase subunit TopoM (713 aa).

Residues 41-504 enclose the Topo IIA-type catalytic domain; that stretch reads IPSAYDGLKP…DATPVSRGDE (464 aa). The O-(5'-phospho-DNA)-tyrosine intermediate role is filled by Tyr-128. The segment at 694–713 is disordered; sequence NRAKASIKGSGADVTPAPAE.

This sequence belongs to the type II topoisomerase GyrA/ParC subunit family. As to quaternary structure, a complex of TopoN and TopoM, possibly a heterotetramer. The cofactor is Mg(2+).

It catalyses the reaction ATP-dependent breakage, passage and rejoining of double-stranded DNA.. Inhibited by quinolone antibiotic ciprofloxacin and coumarin antibiotic novobiocin, but at much higher concentrations than is usual for DNA gyrase/topoisomerase. Catalyzes the relaxation of negatively supercoiled DNA in the presence of ATP or dATP but not other nucleotides. Individual subunits have no activity. Not able to negatively supercoil DNA, it can however introduce positive supercoils in DNA. Relaxes positive supercoils in an ATP-dependent manner. Catenates and decatenates DNA. Generates dsDNA breaks in the presence of the quinolone antibiotic ciprofloxacin, showing it is a topoisomerase. The polypeptide is Topoisomerase subunit TopoM (Mycolicibacterium smegmatis (strain ATCC 700084 / mc(2)155) (Mycobacterium smegmatis)).